The primary structure comprises 645 residues: Threonine--tRNA ligase (645 aa).

Residues 1–63 (MDQIKIKFPD…ESDGDIEIVT (63 aa)) enclose the TGS domain. The catalytic stretch occupies residues 242–540 (DHRKIGKELE…LTEETKGAFP (299 aa)). The Zn(2+) site is built by Cys-336, His-387, and His-517.

This sequence belongs to the class-II aminoacyl-tRNA synthetase family. As to quaternary structure, homodimer. Requires Zn(2+) as cofactor.

The protein resides in the cytoplasm. The catalysed reaction is tRNA(Thr) + L-threonine + ATP = L-threonyl-tRNA(Thr) + AMP + diphosphate + H(+). In terms of biological role, catalyzes the attachment of threonine to tRNA(Thr) in a two-step reaction: L-threonine is first activated by ATP to form Thr-AMP and then transferred to the acceptor end of tRNA(Thr). Also edits incorrectly charged L-seryl-tRNA(Thr). The sequence is that of Threonine--tRNA ligase from Staphylococcus saprophyticus subsp. saprophyticus (strain ATCC 15305 / DSM 20229 / NCIMB 8711 / NCTC 7292 / S-41).